The following is a 363-amino-acid chain: Aspartate-semialdehyde dehydrogenase (363 aa).

7 residues coordinate NADP(+): T15, G16, S17, V18, S40, S43, and L87. Residue C154 is the Acyl-thioester intermediate of the active site. G186 serves as a coordination point for NADP(+). H251 acts as the Proton acceptor in catalysis. N341 contributes to the NADP(+) binding site.

This sequence belongs to the aspartate-semialdehyde dehydrogenase family. As to quaternary structure, homotetramer; dimer of dimers.

It is found in the cytoplasm. Its subcellular location is the cytosol. The protein resides in the nucleus. The catalysed reaction is L-aspartate 4-semialdehyde + phosphate + NADP(+) = 4-phospho-L-aspartate + NADPH + H(+). Its pathway is amino-acid biosynthesis; L-methionine biosynthesis via de novo pathway; L-homoserine from L-aspartate: step 2/3. It functions in the pathway amino-acid biosynthesis; L-threonine biosynthesis; L-threonine from L-aspartate: step 2/5. Inhibited by 4-amino-3-hydroxynaphthalene-1-sulfonic acid and the competitive inhibitor 1,4-benzoquinone and derivates such as 2-chloro-3-methoxy-1,4-naphthoquinone, 2,3-dichloro-1,4-naphthoquinone, 2-chloro-1,4-naphthoquinone, 2-bromo-1,4-naphthoquinone and 2,3-dichloro-5,8-dihydroxy-1,4-naphthoquinone. Its function is as follows. Catalyzes the NADPH-dependent formation of L-aspartate 4-semialdehyde (L-ASA) by the reductive dephosphorylation of 4-phospho-L-aspartate. Mediates the second step in the biosynthesis of amino acids that derive from aspartate (the aspartate family of amino acids), including methioinine and threonine, the latter of which is a precursor to isoleucine. The protein is Aspartate-semialdehyde dehydrogenase of Aspergillus fumigatus (strain ATCC MYA-4609 / CBS 101355 / FGSC A1100 / Af293) (Neosartorya fumigata).